The primary structure comprises 343 residues: SET and MYND domain-containing protein DDB_G0292454 (343 aa).

The 231-residue stretch at 77–307 (EPFISYPSII…PGDEITISYT (231 aa)) folds into the SET domain. Residues Cys93, Cys96, Cys111, Cys114, Cys120, Cys124, His133, and Cys137 each coordinate Zn(2+). An MYND-type zinc finger spans residues 93 to 137 (CNHCLKEIKKEEEEIKQECEECKVYKYCSIECKEKSSIEYHSVLC).

The protein belongs to the class V-like SAM-binding methyltransferase superfamily.

Its function is as follows. Probable methyltransferase. In Dictyostelium discoideum (Social amoeba), this protein is SET and MYND domain-containing protein DDB_G0292454.